The chain runs to 529 residues: T-complex protein 1 subunit delta (529 aa).

The protein belongs to the TCP-1 chaperonin family. Heterooligomeric complex of about 850 to 900 kDa that forms two stacked rings, 12 to 16 nm in diameter.

The protein localises to the cytoplasm. In terms of biological role, molecular chaperone; assists the folding of proteins upon ATP hydrolysis. Known to play a role, in vitro, in the folding of actin and tubulin. The polypeptide is T-complex protein 1 subunit delta (CCT4) (Eremothecium gossypii (strain ATCC 10895 / CBS 109.51 / FGSC 9923 / NRRL Y-1056) (Yeast)).